A 442-amino-acid chain; its full sequence is Protein bag of marbles (442 aa).

Positions 201–250 (FDMPVKSTMPKSLNVRYQLQVLCTKVERFLVQQRRTLEANRHFDFEKYDE) are required for interaction with ubiquitin. The segment at 408–442 (VSMEQPSASEEEFEETEEVPSSPPRHTGRVPRFRS) is disordered. A compositionally biased stretch (acidic residues) spans 416–425 (SEEEFEETEE). A compositionally biased stretch (basic residues) spans 433-442 (HTGRVPRFRS).

Interacts (via central region) with ubiquitin. Interacts (via C-terminus) with otu (via OTU domain); the interaction enhances otu aggregation into amyloid-like structures and enhances its deubiquitinase activity. Together with otu interacts with CycA/cyclin-A (via C-terminus); the interaction stabilizes CycA by promoting and enhancing otu dependent deubiquitination of CycA. Together with otu interacts with Traf6. Part of a complex composed of at least tut, bam and bgcn; complex formation does not require RNA. Interacts (via C-terminus) with bgcn; the interaction is direct and is not disrupted by eIF4A. Interacts with eIF4A (via multiple contacts); the interaction is direct and is not disrupted by bgcn. Interacts (via N-terminus) with tut; the interaction is direct and mediates the interaction between tut and bgcn. As part of the bam-bgcn-tut complex associates with twin; may recruit the CCR4-NOT1 deadenylation complex to mRNA 3'-UTRs to mediate post-transcriptional regulation of expression. Part of a complex composed of at least mei-P26, bam, bgcn and Sxl; this complex is involved in translational repression of nanos mRNA. In terms of processing, ubiquitinated (C-terminal region). In cystoblasts and/or very early cystocytes in testis (at protein level); expression levels are regulated by mei-P26. In cystoblasts and/or very early cystocytes in ovary. Expressed in the gut; expression levels increase with age.

Its subcellular location is the cytoplasm. Its function is as follows. Regulatory component of a deubiquitinase complex consisting of bam and otu. The complex deubiquitinates K63-linked polyubiquitinated proteins, antagonizing the ubiquitination activity of Traf6 and regulating the IMD immune signaling pathway. Otu-bam deubiquitinase activity is regulated by Traf6 dependent immune signaling regulation of bam expression levels; this forms a feedback loop that regulates the IMD immune signaling pathway and balances gut immune activity during aging. The complex deubiquitinates and stabilizes CycA/cyclin-A to regulate CycA-dependent differentiation. Required to initiate both male and female gametogenesis. Part of a complex with bgcn involved in 3'-UTR-dependent translational repression of a subset of mRNAs, including those for mei-P26, nanos and shg/E-cadherin. Repression of mei-P26 is targeted by let-7 miRNA. Involved in a regulatory cascade with mei-P26 to control the progression of cystocytes through transit amplification and the switch to spermatocyte differentiation; mei-P26 facilitates bam accumulation, which in turn represses translation of mei-P26. Forms a complex with tut and bgcn involved in 3'-UTR-dependent post-transcriptional repression of several 3'-RNA processing factors, which promotes germline stem cell lineage differentiation and mitosis-to-meiosis transition. The polypeptide is Protein bag of marbles (Drosophila melanogaster (Fruit fly)).